Reading from the N-terminus, the 446-residue chain is ATP synthase subunit b-delta (446 aa).

An ATP synthase subunit b region spans residues 1-168 (MSTFIGQLVG…PAAADVQYPL (168 aa)). The chain crosses the membrane as a helical span at residues 4-24 (FIGQLVGFAAIVFLVVRYVVP). The interval 169–446 (MTKMRSSSRV…LAAAEAQLPD (278 aa)) is ATP synthase subunit delta.

It in the N-terminal section; belongs to the ATPase B chain family. In the C-terminal section; belongs to the ATPase delta chain family. As to quaternary structure, F-type ATPases have 2 components, F(1) - the catalytic core - and F(0) - the membrane proton channel. F(1) has five subunits: alpha(3), beta(3), gamma(1), delta(1), epsilon(1). F(0) has three main subunits: a(1), b(2) and c(10-14). The alpha and beta chains form an alternating ring which encloses part of the gamma chain. F(1) is attached to F(0) by a central stalk formed by the gamma and epsilon chains, while a peripheral stalk is formed by the delta and b chains.

It is found in the cell membrane. Functionally, f(1)F(0) ATP synthase produces ATP from ADP in the presence of a proton or sodium gradient. F-type ATPases consist of two structural domains, F(1) containing the extramembraneous catalytic core and F(0) containing the membrane proton channel, linked together by a central stalk and a peripheral stalk. During catalysis, ATP synthesis in the catalytic domain of F(1) is coupled via a rotary mechanism of the central stalk subunits to proton translocation. This fusion protein includes a component of the F(0) channel (subunit b) and of the F(1) subunit (subunit delta). Two copies of subunit b and one of delta together form the peripheral 'stator' stalk which links F(1) to F(0). The chain is ATP synthase subunit b-delta (atpFH) from Mycobacterium avium (strain 104).